The primary structure comprises 341 residues: S-adenosylmethionine:tRNA ribosyltransferase-isomerase (341 aa).

It belongs to the QueA family. Monomer.

The protein resides in the cytoplasm. It catalyses the reaction 7-aminomethyl-7-carbaguanosine(34) in tRNA + S-adenosyl-L-methionine = epoxyqueuosine(34) in tRNA + adenine + L-methionine + 2 H(+). It participates in tRNA modification; tRNA-queuosine biosynthesis. Transfers and isomerizes the ribose moiety from AdoMet to the 7-aminomethyl group of 7-deazaguanine (preQ1-tRNA) to give epoxyqueuosine (oQ-tRNA). The polypeptide is S-adenosylmethionine:tRNA ribosyltransferase-isomerase (Desulfitobacterium hafniense (strain DSM 10664 / DCB-2)).